A 193-amino-acid polypeptide reads, in one-letter code: Hypoxanthine/guanine phosphoribosyltransferase (193 aa).

It belongs to the purine/pyrimidine phosphoribosyltransferase family. Archaeal HPRT subfamily. Homodimer.

Its subcellular location is the cytoplasm. The enzyme catalyses IMP + diphosphate = hypoxanthine + 5-phospho-alpha-D-ribose 1-diphosphate. It catalyses the reaction GMP + diphosphate = guanine + 5-phospho-alpha-D-ribose 1-diphosphate. The protein operates within purine metabolism; IMP biosynthesis via salvage pathway; IMP from hypoxanthine: step 1/1. Its function is as follows. Catalyzes a salvage reaction resulting in the formation of IMP that is energically less costly than de novo synthesis. Prefers hypoxanthine, has 66% activity with guanine while activity with adenine, xanthine, uracil, orotate, or cytosine is negligible. The protein is Hypoxanthine/guanine phosphoribosyltransferase of Methanothermobacter marburgensis (strain ATCC BAA-927 / DSM 2133 / JCM 14651 / NBRC 100331 / OCM 82 / Marburg) (Methanobacterium thermoautotrophicum).